The following is a 276-amino-acid chain: Short-chain dehydrogenase anuF (276 aa).

Residues isoleucine 18, aspartate 68, lysine 130, tyrosine 176, lysine 180, valine 209, and threonine 211 each coordinate NADP(+). The Proton acceptor role is filled by tyrosine 176. Tyrosine 176 serves as the catalytic Proton donor. The active-site Lowers pKa of active site Tyr is lysine 180.

Belongs to the short-chain dehydrogenases/reductases (SDR) family.

The catalysed reaction is (2R,9S)-annullatin H + A = (2R)-annullatin F + AH2. Cytochrome P450 monooxygenase; part of the gene cluster that mediates the biosynthesis of annullatin D, an alkylated aromatic polyketide with a fused dihydrobenzofuran lactone ring system that exhibits potent agonistic activities toward the cannabinoid receptors. Within the pathway, anuF is involved in the formation of (2R)-annullatin F from the diastereomer of (2S,9S)-annullatin H (compound 12). The annullatin backbone 2-hydroxymethyl-3-pentylphenol is assembled from one acetyl-CoA starter unit and 5 malonyl-CoA elongation units by cooperation of the highly reducing polyketide synthase anuA, the short-chain dehydrogenase anuB and the oxidoreductase anuC, before being hydroxylated at the C-5 alkyl chain by the cytochrome P450 monooxygenase anuE to form (8S)-annullatin E. The prenyltransferase anuH subsequently installs one isoprenyl group at the benzene ring to form (8S)-annullatin J. Enzymatic or nonenzymatic dihydro-benzofuran ring formation between the prenyl and the phenolic hydroxyl groups in (8S)-annullatin J results in two diastereomers (2S,9S)-annullatin H and compound 12. The intermediate (2S,9S)-annullatin H is then converted to (2S,9S)-annullatin D by the FAD-linked oxidoreductase anuG-catalyzed five-member lactone ring formation. The isomer 12 acts as a substrate for the short-chain dehydrogenase anuF and is oxidized to (2R)-annullatin F, which is subsequently acetylated by an acetyltransferase leading to (2R)-annullatin G formation. The remaining enzymes identified within the cluster, anuD, anuI and anuJ, seem not to be involved in annullatin biosynthesis. This Penicillium roqueforti (strain FM164) protein is Short-chain dehydrogenase anuF.